Consider the following 148-residue polypeptide: Large ribosomal subunit protein uL13 (148 aa).

A disordered region spans residues 128–148 (PEHPHQAQNPQPFEINAKVEK).

This sequence belongs to the universal ribosomal protein uL13 family. As to quaternary structure, part of the 50S ribosomal subunit.

Functionally, this protein is one of the early assembly proteins of the 50S ribosomal subunit, although it is not seen to bind rRNA by itself. It is important during the early stages of 50S assembly. The sequence is that of Large ribosomal subunit protein uL13 from Saccharopolyspora erythraea (strain ATCC 11635 / DSM 40517 / JCM 4748 / NBRC 13426 / NCIMB 8594 / NRRL 2338).